A 126-amino-acid chain; its full sequence is C-X-C motif chemokine 9 (126 aa).

A signal peptide spans 1–21; that stretch reads MKSAVLFLLGIIFLEQCGVRG. 2 disulfides stabilise this stretch: C30–C57 and C32–C73. The N-linked (GlcNAc...) asparagine glycan is linked to N58. The interval 91–126 is disordered; it reads KISQKKKQKRGKKHQKNMKNRKPKTPQSRRRSRKTT. Basic residues predominate over residues 93-126; sequence SQKKKQKRGKKHQKNMKNRKPKTPQSRRRSRKTT.

This sequence belongs to the intercrine alpha (chemokine CxC) family.

The protein localises to the secreted. May be a cytokine that affects the growth, movement, or activation state of cells that participate in immune and inflammatory response. This Mus musculus (Mouse) protein is C-X-C motif chemokine 9 (Cxcl9).